Here is a 656-residue protein sequence, read N- to C-terminus: Hemocyanin subunit A (656 aa).

Positions 1–18 (MWSLALATLFVLGTVIRA) are cleaved as a signal peptide. Positions 197, 201, and 227 each coordinate Cu cation. Asparagine 313 carries an N-linked (GlcNAc...) asparagine glycan. Cu cation contacts are provided by histidine 348, histidine 352, and histidine 388. A disulfide bond links cysteine 558 and cysteine 606.

It belongs to the tyrosinase family. Hemocyanin subfamily. 36-chain polymer consisting of 6 hexamers, each of which includes 4 different chains, A, B, C and D. Hemolymph.

It is found in the secreted. It localises to the extracellular space. Functionally, hemocyanins are copper-containing oxygen carriers occurring freely dissolved in the hemolymph of many mollusks and arthropods. The sequence is that of Hemocyanin subunit A (HCA) from Scutigera coleoptrata (House centipede).